A 219-amino-acid chain; its full sequence is Probable nicotinate-nucleotide adenylyltransferase (219 aa).

The protein belongs to the NadD family.

The enzyme catalyses nicotinate beta-D-ribonucleotide + ATP + H(+) = deamido-NAD(+) + diphosphate. Its pathway is cofactor biosynthesis; NAD(+) biosynthesis; deamido-NAD(+) from nicotinate D-ribonucleotide: step 1/1. In terms of biological role, catalyzes the reversible adenylation of nicotinate mononucleotide (NaMN) to nicotinic acid adenine dinucleotide (NaAD). This is Probable nicotinate-nucleotide adenylyltransferase from Pseudomonas putida (strain GB-1).